A 201-amino-acid chain; its full sequence is Basic helix-loop-helix transcription factor scleraxis (201 aa).

Disordered stretches follow at residues 1–92 and 148–177; these read MSFA…NSVN and AFFH…QPKQ. The span at 59-69 shows a compositional bias: gly residues; sequence RRAGGGGPGGR. Residues 70–88 show a composition bias toward basic and acidic residues; it reads PGREPRQRHTANARERDRT. In terms of domain architecture, bHLH spans 75–127; the sequence is RQRHTANARERDRTNSVNTAFTALRTLIPTEPADRKLSKIETLRLASSYISHL. Over residues 157–167 the composition is skewed to pro residues; that stretch reads SPPPPPPPPPA.

Efficient DNA binding requires dimerization with another bHLH protein. Dimerizes and binds the E-box consensus sequence with E12.

The protein localises to the nucleus. Functionally, plays an early essential role in mesoderm formation, as well as a later role in formation of somite-derived chondrogenic lineages. This chain is Basic helix-loop-helix transcription factor scleraxis (SCX), found in Homo sapiens (Human).